Reading from the N-terminus, the 91-residue chain is Cell division topological specificity factor (91 aa).

Belongs to the MinE family.

Prevents the cell division inhibition by proteins MinC and MinD at internal division sites while permitting inhibition at polar sites. This ensures cell division at the proper site by restricting the formation of a division septum at the midpoint of the long axis of the cell. In Bradyrhizobium diazoefficiens (strain JCM 10833 / BCRC 13528 / IAM 13628 / NBRC 14792 / USDA 110), this protein is Cell division topological specificity factor.